Here is a 1902-residue protein sequence, read N- to C-terminus: Rho GTPase-activating protein 21-B (1902 aa).

8 disordered regions span residues 1-44 (MATR…EGFC), 78-97 (TSVKDEENGNRGVNAGRPRN), 284-317 (RTNRAGPLHRTGLADPSILKRTTSPSSSTPNVPM), 348-369 (PAAHAEESPSPTNHYASPGSHQ), 409-450 (NTTD…SQER), 581-603 (TRNFQNSSRAPHPRPALSDRSGF), 613-632 (IPTPYAAKPHSPSVRSDDGI), and 879-902 (KARENVQSSEDSESRKDSSSDVFS). Over residues 10-22 (EQQQEPSSPASEI) the composition is skewed to polar residues. The region spanning 77-162 (HTSVKDEENG…TLELSVMPKD (86 aa)) is the PDZ domain. A compositionally biased stretch (low complexity) spans 305–317 (TTSPSSSTPNVPM). Residues 409-424 (NTTDYNQMLPNRSSGQ) are compositionally biased toward polar residues. Residues 903–1016 (DSNKEGFLYF…WIKAIQENGN (114 aa)) form the PH domain. Residues 1039-1063 (TMMSSSSNKTEPSPKAQRQTLSIRQ) are compositionally biased toward polar residues. Residues 1039-1095 (TMMSSSSNKTEPSPKAQRQTLSIRQQFRAGKPDDDISPPKDKGSWRRIMKKPFEKKP) form a disordered region. The segment covering 1068-1082 (GKPDDDISPPKDKGS) has biased composition (basic and acidic residues). Residues 1103–1295 (VRLDDCPPAH…TLIQKHDWFF (193 aa)) form the Rho-GAP domain. 6 disordered regions span residues 1306–1357 (TVHE…GSGK), 1375–1394 (RKRKKQKDKPQPSSSEDELD), 1494–1520 (MSDSGTMLSTSSQASVQGSKPKVVSPE), 1559–1704 (VQSV…EPAW), 1729–1748 (QKANAAETRKKKNIRRRHTL), and 1803–1890 (TSTS…KLSG). The segment covering 1339-1357 (SDSATSDSAKSKGSWGSGK) has biased composition (low complexity). Residues 1494 to 1511 (MSDSGTMLSTSSQASVQG) show a composition bias toward polar residues. 2 stretches are compositionally biased toward basic and acidic residues: residues 1575-1585 (SELVSEGRPME) and 1601-1613 (FDRRHQSKAEEPS). Polar residues predominate over residues 1614–1630 (RNVQVNSEGSPSCTEGS). Basic and acidic residues-rich tracts occupy residues 1634 to 1652 (KMDRRRFSSHKLIECDTLS) and 1661 to 1673 (TDSDCSAESKTEE). A compositionally biased stretch (basic residues) spans 1737 to 1748 (RKKKNIRRRHTL). The span at 1865-1878 (NGDSFQSKNKNNFS) shows a compositional bias: polar residues.

It localises to the golgi apparatus membrane. The protein localises to the cell junction. The protein resides in the cytoplasmic vesicle membrane. It is found in the cytoplasm. Its subcellular location is the cytoskeleton. Its function is as follows. GTPase-activating protein (GAP) for rhoa and cdc42. This is Rho GTPase-activating protein 21-B (arhgap21-b) from Xenopus laevis (African clawed frog).